Consider the following 206-residue polypeptide: Small ribosomal subunit protein uS4 (206 aa).

An S4 RNA-binding domain is found at 96-156; the sequence is GRLDNVVYRM…EKSKKQARIK (61 aa).

This sequence belongs to the universal ribosomal protein uS4 family. Part of the 30S ribosomal subunit. Contacts protein S5. The interaction surface between S4 and S5 is involved in control of translational fidelity.

Its function is as follows. One of the primary rRNA binding proteins, it binds directly to 16S rRNA where it nucleates assembly of the body of the 30S subunit. With S5 and S12 plays an important role in translational accuracy. This is Small ribosomal subunit protein uS4 from Histophilus somni (strain 2336) (Haemophilus somnus).